Reading from the N-terminus, the 131-residue chain is Agouti-related protein (131 aa).

The first 20 residues, 1 to 20 (MLTAMLLSCVLLLALPPTLG), serve as a signal peptide directing secretion. Residues 21–81 (VQMGVAPLKG…VLDPQNRESR (61 aa)) constitute a propeptide that is removed on maturation. Disulfide bonds link cysteine 86-cysteine 101, cysteine 93-cysteine 107, cysteine 100-cysteine 118, cysteine 104-cysteine 128, and cysteine 109-cysteine 116. Residues 86–128 (CVRLHESCLGQQVPCCDPCATCYCRFFNAFCYCRKLGTATNLC) form the Agouti domain. The interaction with melanocortin receptors stretch occupies residues 110–112 (RFF).

In terms of assembly, interacts with melanocortin receptors MC3R, MC4R and MC5R. In terms of tissue distribution, expressed in arcuate nucleus and median eminence, adrenal gland (medulla), hypothalamus, testis, and lung.

It localises to the secreted. Its subcellular location is the golgi apparatus lumen. Plays a role in weight homeostasis. Involved in the control of feeding behavior through the central melanocortin system. Acts as alpha melanocyte-stimulating hormone antagonist by inhibiting cAMP production mediated by stimulation of melanocortin receptors within the hypothalamus and adrenal gland. Has very low activity with MC5R. Is an inverse agonist for MC3R and MC4R being able to suppress their constitutive activity. It promotes MC3R and MC4R endocytosis in an arrestin-dependent manner. The sequence is that of Agouti-related protein (Agrp) from Mus musculus (Mouse).